Here is a 436-residue protein sequence, read N- to C-terminus: Methylenetetrahydrofolate--tRNA-(uracil-5-)-methyltransferase TrmFO (436 aa).

Gly-10–Gly-15 contributes to the FAD binding site.

The protein belongs to the MnmG family. TrmFO subfamily. It depends on FAD as a cofactor.

The protein localises to the cytoplasm. The enzyme catalyses uridine(54) in tRNA + (6R)-5,10-methylene-5,6,7,8-tetrahydrofolate + NADH + H(+) = 5-methyluridine(54) in tRNA + (6S)-5,6,7,8-tetrahydrofolate + NAD(+). It catalyses the reaction uridine(54) in tRNA + (6R)-5,10-methylene-5,6,7,8-tetrahydrofolate + NADPH + H(+) = 5-methyluridine(54) in tRNA + (6S)-5,6,7,8-tetrahydrofolate + NADP(+). Catalyzes the folate-dependent formation of 5-methyl-uridine at position 54 (M-5-U54) in all tRNAs. This is Methylenetetrahydrofolate--tRNA-(uracil-5-)-methyltransferase TrmFO from Staphylococcus carnosus (strain TM300).